A 95-amino-acid polypeptide reads, in one-letter code: Histone-like DNA-binding protein (95 aa).

Belongs to the bacterial histone-like protein family.

The polypeptide is Histone-like DNA-binding protein (Rickettsia conorii (strain ATCC VR-613 / Malish 7)).